A 494-amino-acid chain; its full sequence is Protein transport protein Sec61 subunit alpha (494 aa).

Transmembrane regions (helical) follow at residues 36-56 (LWTS…LYGI), 79-99 (LMEL…LLAG), 122-142 (LLGI…GMYG), 147-167 (LGAG…IIVI), 177-197 (YGIG…SIVW), 249-269 (LLAT…QVEL), 294-314 (MPII…QILY), 359-379 (IVSD…SCAL), 426-446 (AAFG…MGAI), and 450-470 (TGIL…LLAV).

This sequence belongs to the SecY/SEC61-alpha family. As to quaternary structure, heterotrimeric complex composed of SEC61-alpha, SEC61-beta and SEC61-gamma.

It is found in the endoplasmic reticulum membrane. Its function is as follows. Appears to play a crucial role in the insertion of secretory and membrane polypeptides into the ER. It is required for assembly of membrane and secretory proteins. This chain is Protein transport protein Sec61 subunit alpha, found in Pyrenomonas salina.